We begin with the raw amino-acid sequence, 163 residues long: Nucleotide-binding protein Spro_1084 (163 aa).

This sequence belongs to the YajQ family.

Nucleotide-binding protein. This chain is Nucleotide-binding protein Spro_1084, found in Serratia proteamaculans (strain 568).